The chain runs to 331 residues: Probable protein phosphatase 2C 1 (331 aa).

Positions 1 to 29 are disordered; it reads MAASSTATRLSPPRLHAPTTPSPHLPLRR. In terms of domain architecture, PPM-type phosphatase spans 48–292; it reads THLIPHPRKA…DDITVIVAQV (245 aa). D79, G80, D210, and D283 together coordinate Mn(2+). The segment at 300–331 is disordered; the sequence is DEGVDEEKGQGDEQGSAVAVASSEQKEDSITT.

The protein belongs to the PP2C family. Mg(2+) is required as a cofactor. The cofactor is Mn(2+).

It carries out the reaction O-phospho-L-seryl-[protein] + H2O = L-seryl-[protein] + phosphate. It catalyses the reaction O-phospho-L-threonyl-[protein] + H2O = L-threonyl-[protein] + phosphate. The sequence is that of Probable protein phosphatase 2C 1 from Oryza sativa subsp. japonica (Rice).